The sequence spans 784 residues: Probable phosphoketolase (784 aa).

It belongs to the XFP family. Requires thiamine diphosphate as cofactor.

The sequence is that of Probable phosphoketolase from Rhodopseudomonas palustris (strain HaA2).